Consider the following 478-residue polypeptide: BTB/POZ domain-containing protein 17 (478 aa).

A signal peptide spans 1-28 (MLRKGSCKPGSWGSFWAILALVGLVTRA). Asparagine 61, asparagine 100, asparagine 195, and asparagine 307 each carry an N-linked (GlcNAc...) asparagine glycan. The 70-residue stretch at 63-132 (SDVILRVQAV…LYCGELTVLL (70 aa)) folds into the BTB domain. Residues 169 to 269 (AVGWYHYAVS…IPPAQLFQLQ (101 aa)) form the BACK domain.

The protein localises to the secreted. The chain is BTB/POZ domain-containing protein 17 (Btbd17) from Mus musculus (Mouse).